Here is a 296-residue protein sequence, read N- to C-terminus: N-acetylmuramic acid 6-phosphate etherase (296 aa).

The SIS domain maps to 54–217 (VISCFQKGGR…STASMVGIGK (164 aa)). The Proton donor role is filled by glutamate 82. The active site involves glutamate 113.

The protein belongs to the GCKR-like family. MurNAc-6-P etherase subfamily. In terms of assembly, homodimer.

It catalyses the reaction N-acetyl-D-muramate 6-phosphate + H2O = N-acetyl-D-glucosamine 6-phosphate + (R)-lactate. It functions in the pathway amino-sugar metabolism; N-acetylmuramate degradation. In terms of biological role, specifically catalyzes the cleavage of the D-lactyl ether substituent of MurNAc 6-phosphate, producing GlcNAc 6-phosphate and D-lactate. This Listeria monocytogenes serotype 4b (strain CLIP80459) protein is N-acetylmuramic acid 6-phosphate etherase.